The chain runs to 794 residues: LPS-assembly protein LptD (794 aa).

The first 31 residues, 1 to 31 (MPSHCSSLLCARFRLSSLAVIVALAASGVRA), serve as a signal peptide directing secretion.

Belongs to the LptD family. As to quaternary structure, component of the lipopolysaccharide transport and assembly complex. Interacts with LptE and LptA.

It is found in the cell outer membrane. Together with LptE, is involved in the assembly of lipopolysaccharide (LPS) at the surface of the outer membrane. This Marinobacter nauticus (strain ATCC 700491 / DSM 11845 / VT8) (Marinobacter aquaeolei) protein is LPS-assembly protein LptD.